Here is a 548-residue protein sequence, read N- to C-terminus: Phosphoglucomutase (548 aa).

Serine 135 functions as the Phosphoserine intermediate in the catalytic mechanism. Serine 135, aspartate 288, aspartate 290, and aspartate 292 together coordinate Mg(2+).

It belongs to the phosphohexose mutase family. Requires Mg(2+) as cofactor.

The enzyme catalyses alpha-D-glucose 1-phosphate = alpha-D-glucose 6-phosphate. The protein operates within glycolipid metabolism; diglucosyl-diacylglycerol biosynthesis. Functionally, catalyzes the interconversion between glucose-6-phosphate and alpha-glucose-1-phosphate. This is the first step in the biosynthesis of diglucosyl-diacylglycerol (Glc2-DAG), i.e. a glycolipid found in the membrane, which is also used as a membrane anchor for lipoteichoic acid (LTA). The polypeptide is Phosphoglucomutase (pgcA) (Staphylococcus haemolyticus (strain JCSC1435)).